Consider the following 338-residue polypeptide: Heme-dependent oxidative N-demethylase alpha subunit (338 aa).

Positions 38 and 194 each coordinate heme b. Residue R224 is the Proton donor of the active site. Position 226 (N226) interacts with heme b. Residue E266 participates in dimethylamine binding. Heme b is bound by residues Y317 and K318.

The heme-dependent oxidative N-demethylase (HODM) is a heterotetramer composed of a catalytic alpha subunit, a FMN/2Fe-2S-dependent oxidoreductase beta subunit, a gamma subunit with putative aminotransferase activity, and a delta subunit of unknown function.

It carries out the reaction dimethylamine + NADPH + O2 + H(+) = methylamine + formaldehyde + NADP(+) + H2O. Functionally, component of the heme-dependent oxidative N-demethylase (HODM) enzyme, that catalyzes the NADPH-dependent oxidation of dimethylamine (DMA) to methylamine (MA) and formaldehyde. Functions in bacterial methylated amine catabolism, linking alkylamine oxidation to the tetrahydrofolate C1 pool. The alpha subunit of HODM binds heme, oxygen and DMA, and serves as the site of the oxidative N-demethylase activity. The sequence is that of Heme-dependent oxidative N-demethylase alpha subunit from Ectopseudomonas mendocina (strain ymp) (Pseudomonas mendocina).